The sequence spans 457 residues: UDP-N-acetyl-alpha-D-muramoyl-L-alanyl-L-glutamate epimerase (457 aa).

This sequence belongs to the MurL family.

The catalysed reaction is UDP-N-acetyl-alpha-D-muramoyl-L-alanyl-L-glutamate + ATP + H2O = UDP-N-acetyl-alpha-D-muramoyl-L-alanyl-D-glutamate + AMP + diphosphate + H(+). Its pathway is cell wall biogenesis; peptidoglycan biosynthesis. In terms of biological role, cell wall formation. Catalyzes epimerization of the terminal L-glutamate in UDP-N-acetyl-alpha-D-muramoyl-L-alanyl-L-glutamate. This chain is UDP-N-acetyl-alpha-D-muramoyl-L-alanyl-L-glutamate epimerase, found in Salinispora tropica (strain ATCC BAA-916 / DSM 44818 / JCM 13857 / NBRC 105044 / CNB-440).